The following is a 494-amino-acid chain: Lysine--tRNA ligase (494 aa).

Mg(2+) is bound by residues E407 and E414.

The protein belongs to the class-II aminoacyl-tRNA synthetase family. Homodimer. The cofactor is Mg(2+).

The protein resides in the cytoplasm. The enzyme catalyses tRNA(Lys) + L-lysine + ATP = L-lysyl-tRNA(Lys) + AMP + diphosphate. The chain is Lysine--tRNA ligase from Lactococcus lactis subsp. lactis (strain IL1403) (Streptococcus lactis).